The sequence spans 495 residues: ATP synthase subunit beta, chloroplastic (495 aa).

An ATP-binding site is contributed by 172-179 (GGAGVGKT).

The protein belongs to the ATPase alpha/beta chains family. In terms of assembly, F-type ATPases have 2 components, CF(1) - the catalytic core - and CF(0) - the membrane proton channel. CF(1) has five subunits: alpha(3), beta(3), gamma(1), delta(1), epsilon(1). CF(0) has four main subunits: a(1), b(1), b'(1) and c(9-12).

The protein resides in the plastid. It localises to the chloroplast thylakoid membrane. The catalysed reaction is ATP + H2O + 4 H(+)(in) = ADP + phosphate + 5 H(+)(out). In terms of biological role, produces ATP from ADP in the presence of a proton gradient across the membrane. The catalytic sites are hosted primarily by the beta subunits. The chain is ATP synthase subunit beta, chloroplastic from Scilla messeniaca (Greek squill).